Reading from the N-terminus, the 61-residue chain is Metallothionein-2 (61 aa).

The residue at position 1 (Met1) is an N-acetylmethionine. The segment at Met1–Cys29 is beta. A divalent metal cation is bound by residues Cys5, Cys7, Cys13, Cys15, Cys19, Cys21, Cys24, Cys26, Cys29, Cys33, Cys34, Cys36, Cys37, Cys41, Cys44, Cys48, Cys50, and Cys57. The interval Lys30–Ala61 is alpha. Ser58 is subject to Phosphoserine. The a divalent metal cation site is built by Cys59 and Cys60.

It belongs to the metallothionein superfamily. Type 1 family.

Functionally, metallothioneins have a high content of cysteine residues that bind various heavy metals; these proteins are transcriptionally regulated by both heavy metals and glucocorticoids. The chain is Metallothionein-2 (MT2) from Mesocricetus auratus (Golden hamster).